A 111-amino-acid chain; its full sequence is Nucleoid-associated protein Fphi_0115 (111 aa).

The tract at residues 1-27 is disordered; sequence MNFDMSKLMQQAQKMQEQMKKAQQERE. The segment covering 17–27 has biased composition (basic and acidic residues); the sequence is EQMKKAQQERE.

It belongs to the YbaB/EbfC family. As to quaternary structure, homodimer.

It is found in the cytoplasm. The protein localises to the nucleoid. Binds to DNA and alters its conformation. May be involved in regulation of gene expression, nucleoid organization and DNA protection. The chain is Nucleoid-associated protein Fphi_0115 from Francisella philomiragia subsp. philomiragia (strain ATCC 25017 / CCUG 19701 / FSC 153 / O#319-036).